Consider the following 860-residue polypeptide: Transcription factor E2F8 (860 aa).

The segment at 1–114 is disordered; sequence MENQKENLFS…NEKSQPSRKE (114 aa). A Phosphoserine modification is found at S71. Basic and acidic residues-rich tracts occupy residues 74 to 84 and 92 to 114; these read IRSRDQKRGLS and EARD…SRKE. DNA-binding regions lie at residues 112-181 and 261-347; these read RKEK…TWHG and RKDK…KWTG. Disordered stretches follow at residues 407 to 433 and 533 to 616; these read RRKI…PPVP and TPPH…PKED. Positions 411 to 426 are enriched in low complexity; sequence SSAPSSPVKSSKAESS. A phosphoserine mark is found at S412 and S416. Positions 542-554 are enriched in polar residues; that stretch reads VCPTQSSNATGSK. 2 stretches are compositionally biased toward basic and acidic residues: residues 555 to 565 and 586 to 596; these read DPTDAPTEKTA and RSKETTGDRGT.

This sequence belongs to the E2F/DP family. Homodimer and heterodimer: mainly forms homodimers and, to a lesser extent, heterodimers with E2F8. Dimerization is important for DNA-binding. Interacts with HIF1A.

The protein resides in the nucleus. Atypical E2F transcription factor that participates in various processes such as angiogenesis and polyploidization of specialized cells. Mainly acts as a transcription repressor that binds DNA independently of DP proteins and specifically recognizes the E2 recognition site 5'-TTTC[CG]CGC-3'. Directly represses transcription of classical E2F transcription factors such as E2F1: component of a feedback loop in S phase by repressing the expression of E2F1, thereby preventing p53/TP53-dependent apoptosis. Plays a key role in polyploidization of cells in placenta and liver by regulating the endocycle, probably by repressing genes promoting cytokinesis and antagonizing action of classical E2F proteins (E2F1, E2F2 and/or E2F3). Required for placental development by promoting polyploidization of trophoblast giant cells. Acts as a promoter of sprouting angiogenesis, possibly by acting as a transcription activator: associates with HIF1A, recognizes and binds the VEGFA promoter, which is different from canonical E2 recognition site, and activates expression of the VEGFA gene. The protein is Transcription factor E2F8 (E2f8) of Rattus norvegicus (Rat).